The sequence spans 592 residues: Protein kinase C zeta type (592 aa).

The region spanning 15 to 98 (RVRLKAHYGG…EGLIIHVFPS (84 aa)) is the PB1 domain. An interaction with SQSTM1 region spans residues 79–145 (AFRLARQCRD…KRFNRRAYCG (67 aa)). A Phorbol-ester/DAG-type zinc finger spans residues 130–180 (GHLFQAKRFNRRAYCGQCSERIWGLARQGYRCINCKLLVHKRCHGLVPLTC). In terms of domain architecture, Protein kinase spans 252 to 518 (FDLIRVIGRG…FSDIKSHAFF (267 aa)). ATP contacts are provided by residues 258-266 (IGRGSYAKV) and Lys-281. The Proton acceptor role is filled by Asp-376. A Phosphothreonine; by PDPK1 and PI3K modification is found at Thr-410. Residues 519–590 (RSIDWDLLEK…INPLLLSTEE (72 aa)) form the AGC-kinase C-terminal domain. The residue at position 560 (Thr-560) is a Phosphothreonine. Ser-591 carries the phosphoserine modification.

It belongs to the protein kinase superfamily. AGC Ser/Thr protein kinase family. PKC subfamily. Forms a ternary complex with SQSTM1 and KCNAB2. Forms another ternary complex with SQSTM1 and GABRR3. Forms a complex with SQSTM1 and MAP2K5. Interacts with PARD6A, PARD6B, PARD6G and SQSTM1. Part of a complex with PARD3, PARD6A or PARD6B or PARD6G and CDC42 or RAC1. Interacts with ADAP1/CENTA1. Forms a ternary complex composed of SQSTM1 and PAWR. Interacts directly with SQSTM1. Interacts with IKBKB. Interacts (via the protein kinase domain) with WWC1. Forms a tripartite complex with WWC1 and DDR1, but predominantly in the absence of collagen. Component of the Par polarity complex, composed of at least phosphorylated PRKCZ, PARD3 and TIAM1. Interacts with PDPK1 (via N-terminal region). Interacts with WDFY2 (via WD repeats 1-3). Interacts with VAMP2. Forms a complex with WDFY2 and VAMP2. Interacts with APPL1. Interacts with WWC1, WWC2 and WWC3. Post-translationally, CDH5 is required for its phosphorylation at Thr-410. Phosphorylated by protein kinase PDPK1; phosphorylation is inhibited by the apoptotic C-terminal cleavage product of PKN2. Phosphorylation at Thr-410 by PI3K activates the kinase. Expressed in brain, and to a lesser extent in lung, kidney and testis.

It is found in the cytoplasm. It localises to the endosome. The protein localises to the cell junction. The protein resides in the membrane. The catalysed reaction is L-seryl-[protein] + ATP = O-phospho-L-seryl-[protein] + ADP + H(+). The enzyme catalyses L-threonyl-[protein] + ATP = O-phospho-L-threonyl-[protein] + ADP + H(+). Its activity is regulated as follows. Atypical PKCs (PRKCI and PRKCZ) exhibit an elevated basal enzymatic activity (that may be due to the interaction with SMG1 or SQSTM1) and are not regulated by diacylglycerol, phosphatidylserine, phorbol esters or calcium ions. Two specific sites, Thr-410 (activation loop of the kinase domain) and Thr-560 (turn motif), need to be phosphorylated for its full activation. Phosphatidylinositol 3,4,5-trisphosphate might be a physiological activator. Isoform 2: Constitutively active. In terms of biological role, calcium- and diacylglycerol-independent serine/threonine-protein kinase that functions in phosphatidylinositol 3-kinase (PI3K) pathway and mitogen-activated protein (MAP) kinase cascade, and is involved in NF-kappa-B activation, mitogenic signaling, cell proliferation, cell polarity, inflammatory response and maintenance of long-term potentiation (LTP). Upon lipopolysaccharide (LPS) treatment in macrophages, or following mitogenic stimuli, functions downstream of PI3K to activate MAP2K1/MEK1-MAPK1/ERK2 signaling cascade independently of RAF1 activation. Required for insulin-dependent activation of AKT3, but may function as an adapter rather than a direct activator. Upon insulin treatment may act as a downstream effector of PI3K and contribute to the activation of translocation of the glucose transporter SLC2A4/GLUT4 and subsequent glucose transport in adipocytes. In EGF-induced cells, binds and activates MAP2K5/MEK5-MAPK7/ERK5 independently of its kinase activity and can activate JUN promoter through MEF2C. Through binding with SQSTM1/p62, functions in interleukin-1 signaling and activation of NF-kappa-B with the specific adapters RIPK1 and TRAF6. Participates in TNF-dependent transactivation of NF-kappa-B by phosphorylating and activating IKBKB kinase, which in turn leads to the degradation of NF-kappa-B inhibitors. In migrating astrocytes, forms a cytoplasmic complex with PARD6A and is recruited by CDC42 to function in the establishment of cell polarity along with the microtubule motor and dynein. In association with FEZ1, stimulates neuronal differentiation in PC12 cells. In the inflammatory response, is required for the T-helper 2 (Th2) differentiation process, including interleukin production, efficient activation of JAK1 and the subsequent phosphorylation and nuclear translocation of STAT6. May be involved in development of allergic airway inflammation (asthma), a process dependent on Th2 immune response. In the NF-kappa-B-mediated inflammatory response, can relieve SETD6-dependent repression of NF-kappa-B target genes by phosphorylating the RELA subunit at 'Ser-311'. Phosphorylates VAMP2 in vitro. Phosphorylates and activates LRRK1, which phosphorylates RAB proteins involved in intracellular trafficking. Functionally, involved in late synaptic long term potention phase in CA1 hippocampal cells and long term memory maintenance. The protein is Protein kinase C zeta type (PRKCZ) of Homo sapiens (Human).